We begin with the raw amino-acid sequence, 68 residues long: uncharacterized protein (68 aa).

The segment at 1-27 (MNEFEKWIEGRYEPHEQKQKEHEDTMG) is disordered.

This is an uncharacterized protein from Bacillus subtilis (strain 168).